Consider the following 62-residue polypeptide: Large ribosomal subunit protein uL30 (62 aa).

This sequence belongs to the universal ribosomal protein uL30 family. In terms of assembly, part of the 50S ribosomal subunit.

This chain is Large ribosomal subunit protein uL30, found in Hydrogenovibrio crunogenus (strain DSM 25203 / XCL-2) (Thiomicrospira crunogena).